The sequence spans 656 residues: Protein sly1 homolog (656 aa).

4 tandem repeats follow at residues aspartate 85 to alanine 121, arginine 203 to glutamine 245, leucine 419 to arginine 456, and glutamine 460 to threonine 496. The segment at aspartate 85–threonine 496 is 4 X approximate repeats.

This sequence belongs to the STXBP/unc-18/SEC1 family.

Its subcellular location is the cytoplasm. The protein localises to the membrane. In terms of biological role, non-vital for development. The chain is Protein sly1 homolog (Slh) from Drosophila virilis (Fruit fly).